Reading from the N-terminus, the 894-residue chain is MALASAAPGSIFCKQLLFSLLVLTLLCDACQKVYLRVPSHLQAETLVGKVNLEECLKSASLIRSSDPAFRILEDGSIYTTHDLILSSERKSFSIFLSDGQRREQQEIKVVLSARENKSPKKRHTKDTALKRSKRRWAPIPASLMENSLGPFPQHVQQIQSDAAQNYTIFYSISGPGVDKEPFNLFYIEKDTGDIFCTRSIDREKYEQFALYGYATTADGYAPEYPLPLIIKIEDDNDNAPYFEHRVTIFTVPENCRSGTSVGKVTATDLDEPDTLHTRLKYKILQQIPDHPKHFSIHPDTGVITTTTPFLDREKCDTYQLIMEVRDMGGQPFGLFNTGTITISLEDENDNPPSFTETSYVTEVEENRIDVEILRMKVQDQDLPNTPHSKAVYKILQGNENGNFIISTDPNTNEGVLCVVKPLNYEVNRQVILQVGVINEAQFSKAASSQTPTMCTTTVTVKIIDSDEGPECHPPVKVIQSQDGFPAGQELLGYKALDPEISSGEGLRYQKLGDEDNWFEINQHTGDLRTLKVLDRESKFVKNNQYNISVVAVDAVGRSCTGTLVVHLDDYNDHAPQIDKEVTICQNNEDFAVLKPVDPDGPENGPPFQFFLDNSASKNWNIEEKDGKTAILRQRQNLDYNYYSVPIQIKDRHGLVATHMLTVRVCDCSTPSECRMKDKSTRDVRPNVILGRWAILAMVLGSVLLLCILFTCFCVTAKRTVKKCFPEDIAQQNLIVSNTEGPGEEVTEANIRLPMQTSNICDTSMSVGTVGGQGIKTQQSFEMVKGGYTLDSNKGGGHQTLESVKGVGQGDTGRYAYTDWQSFTQPRLGEKVYLCGQDEEHKHCEDYVCSYNYEGKGSLAGSVGCCSDRQEEEGLEFLDHLEPKFRTLAKTCIKK.

A signal peptide spans methionine 1–alanine 29. The propeptide occupies cysteine 30 to arginine 134. Cadherin domains are found at residues arginine 135–phenylalanine 242, glutamate 243–phenylalanine 354, threonine 355–cysteine 471, histidine 472–proline 575, and glutamine 576–aspartate 682. Residues arginine 135–arginine 691 lie on the Extracellular side of the membrane. The N-linked (GlcNAc...) asparagine glycan is linked to asparagine 165. At threonine 385 the chain carries Phosphothreonine. An N-linked (GlcNAc...) asparagine glycan is attached at asparagine 546. The chain crosses the membrane as a helical span at residues tryptophan 692–valine 714. Residues threonine 715–lysine 894 are Cytoplasmic-facing.

In terms of assembly, binds to JUP/plakoglobin. As to expression, strongly expressed in epidermis, less in lymph node and tongue.

The protein localises to the cell membrane. Its subcellular location is the cell junction. The protein resides in the desmosome. Its function is as follows. A component of desmosome cell-cell junctions which are required for positive regulation of cellular adhesion. Required for desmosome adhesion strength between the granular layers of the epidermis, as a result moderates epidermal proliferation and differentiation. Is therefore required to maintain postnatal epidermal barrier function and normal hair follicle morphology into adulthood. The polypeptide is Desmocollin-1 (DSC1) (Homo sapiens (Human)).